Here is a 299-residue protein sequence, read N- to C-terminus: Protoheme IX farnesyltransferase (299 aa).

9 helical membrane-spanning segments follow: residues 17–37 (VVAL…PAPY), 41–61 (GLLV…AAVF), 91–111 (ALMW…LFVN), 113–133 (ITMV…TLYL), 141–161 (IVIG…AVSG), 168–188 (ACLL…ALAI), 207–227 (GLAY…LVSL), 228–248 (LPYL…ALGI), and 266–286 (IAWC…VTLL).

Belongs to the UbiA prenyltransferase family. Protoheme IX farnesyltransferase subfamily.

The protein localises to the cell inner membrane. The catalysed reaction is heme b + (2E,6E)-farnesyl diphosphate + H2O = Fe(II)-heme o + diphosphate. The protein operates within porphyrin-containing compound metabolism; heme O biosynthesis; heme O from protoheme: step 1/1. In terms of biological role, converts heme B (protoheme IX) to heme O by substitution of the vinyl group on carbon 2 of heme B porphyrin ring with a hydroxyethyl farnesyl side group. This is Protoheme IX farnesyltransferase from Ruthia magnifica subsp. Calyptogena magnifica.